The primary structure comprises 155 residues: Transcriptional repressor NrdR (155 aa).

The segment at 3 to 34 (CPKCDHNGTRVLDSRPVQDHYSIRRRRECEKC) is a zinc-finger region. One can recognise an ATP-cone domain in the interval 49–139 (LIIVKKDGNR…VYRQFKDITV (91 aa)).

Belongs to the NrdR family. It depends on Zn(2+) as a cofactor.

Functionally, negatively regulates transcription of bacterial ribonucleotide reductase nrd genes and operons by binding to NrdR-boxes. The protein is Transcriptional repressor NrdR of Exiguobacterium sp. (strain ATCC BAA-1283 / AT1b).